The sequence spans 196 residues: Heat shock protein beta-8 (196 aa).

The disordered stretch occupies residues Met-1 to Ser-28. 2 positions are modified to phosphoserine: Ser-24 and Ser-57. A Phosphothreonine modification is found at Thr-63. Asymmetric dimethylarginine is present on residues Arg-71 and Arg-78. In terms of domain architecture, sHSP spans Arg-78–Glu-185. Ser-87 bears the Phosphoserine mark. Residues Pro-176–Ser-196 form a disordered region. A compositionally biased stretch (polar residues) spans Gly-178 to Ser-196.

The protein belongs to the small heat shock protein (HSP20) family. Monomer. Forms a ternary complex with BAG3 and HSPA1A. Component of the chaperone-assisted selective autophagy (CASA) complex consisting of BAG3, HSPA8/HSC70, HSPB8 and STUB1/CHIP. Interacts with HSPB1. Interacts with DNAJB6. Interacts with BAG3. As to expression, highly expressed in skeletal muscle, heart, uterus, liver, lung and ovary. Low levels found in stomach and brain. Not detected in small intestine, large intestine, kidney, spleen and testis. In the ovary, expression is concentrated in the endometrium and in the connective tissue between the circular and longitudinal muscles of the myometrium.

Its subcellular location is the cytoplasm. It is found in the nucleus. Functionally, involved in the chaperone-assisted selective autophagy (CASA), a crucial process for protein quality control, particularly in mechanical strained cells and tissues such as muscle. Displays temperature-dependent chaperone activity. In Mus musculus (Mouse), this protein is Heat shock protein beta-8 (Hspb8).